We begin with the raw amino-acid sequence, 297 residues long: Protease HtpX homolog (297 aa).

Transmembrane regions (helical) follow at residues 14-34 and 39-59; these read VILL…AGYL and YQLG…SMIF. His143 serves as a coordination point for Zn(2+). Glu144 is an active-site residue. His147 contacts Zn(2+). Transmembrane regions (helical) follow at residues 158–178 and 193–213; these read IAVA…RMMW and GFGA…PLAA. Glu225 contributes to the Zn(2+) binding site.

It belongs to the peptidase M48B family. It depends on Zn(2+) as a cofactor.

The protein resides in the cell membrane. The sequence is that of Protease HtpX homolog from Streptococcus equi subsp. zooepidemicus (strain MGCS10565).